Reading from the N-terminus, the 257-residue chain is Chymotrypsin-like protease VLCTLP (257 aa).

An N-terminal signal peptide occupies residues 1 to 18 (MVLIRVLANLLLLQLSYA). Positions 19–24 (QKSSEL) are excised as a propeptide. The region spanning 25-248 (VVGGDECNIN…YSDWIQSIIA (224 aa)) is the Peptidase S1 domain. Intrachain disulfides connect Cys31–Cys162, Cys49–Cys65, Cys97–Cys255, Cys141–Cys209, Cys173–Cys188, and Cys199–Cys224. N-linked (GlcNAc...) asparagine glycosylation is present at Asn44. His64 acts as the Charge relay system in catalysis. An N-linked (GlcNAc...) asparagine glycan is attached at Asn100. Catalysis depends on Asp109, which acts as the Charge relay system. Asn116 and Asn153 each carry an N-linked (GlcNAc...) asparagine glycan. Ser203 serves as the catalytic Charge relay system. Asn250 carries an N-linked (GlcNAc...) asparagine glycan.

The protein belongs to the peptidase S1 family. Snake venom subfamily. In terms of assembly, monomer. In terms of processing, partial deglycosylation has not effect on enzyme activity. In terms of tissue distribution, expressed by the venom gland.

Its subcellular location is the secreted. With respect to regulation, inhibited by PMSF. Snake venom serine protease with tyrosine-specific chymotrypsin-like activity. Hydrolyzes the N-acetyl-L-tyrosine ethyl ester (ATEE). Has weak fibrinogenolytic activity. Weakly hydrolyzes azocasein, Aalpha-chain (FGA) and more slowly Bbeta-chain (FGB) of fibrinogen. Optimal substrates are angiotensins I and II (AGT). This is Chymotrypsin-like protease VLCTLP from Macrovipera lebetinus (Levantine viper).